Consider the following 338-residue polypeptide: Heat-inducible transcription repressor HrcA (338 aa).

Belongs to the HrcA family.

Functionally, negative regulator of class I heat shock genes (grpE-dnaK-dnaJ and groELS operons). Prevents heat-shock induction of these operons. The polypeptide is Heat-inducible transcription repressor HrcA (Polaromonas sp. (strain JS666 / ATCC BAA-500)).